A 430-amino-acid chain; its full sequence is Tyrosine--tRNA ligase (430 aa).

An L-tyrosine-binding site is contributed by Y32. Residues 37-46 (PTADSLHIGH) carry the 'HIGH' region motif. The L-tyrosine site is built by Y172 and Q176. Residues 232-236 (KFGKT) carry the 'KMSKS' region motif. Residue K235 participates in ATP binding. The region spanning 362–429 (VKAVDLFVDN…GKKNYYLIIA (68 aa)) is the S4 RNA-binding domain.

It belongs to the class-I aminoacyl-tRNA synthetase family. TyrS type 1 subfamily. Homodimer.

The protein resides in the cytoplasm. The enzyme catalyses tRNA(Tyr) + L-tyrosine + ATP = L-tyrosyl-tRNA(Tyr) + AMP + diphosphate + H(+). Catalyzes the attachment of tyrosine to tRNA(Tyr) in a two-step reaction: tyrosine is first activated by ATP to form Tyr-AMP and then transferred to the acceptor end of tRNA(Tyr). This Bacteroides fragilis (strain YCH46) protein is Tyrosine--tRNA ligase.